The sequence spans 776 residues: Protein translocase subunit SecA 2 (776 aa).

ATP-binding positions include Q80, 98 to 102 (GEGKT), and D486.

This sequence belongs to the SecA family. Monomer and homodimer. Part of the essential Sec protein translocation apparatus which comprises SecA, SecYEG and auxiliary proteins SecDF. Other proteins may also be involved.

It is found in the cell membrane. The protein localises to the cytoplasm. It catalyses the reaction ATP + H2O + cellular proteinSide 1 = ADP + phosphate + cellular proteinSide 2.. In terms of biological role, part of the Sec protein translocase complex. Interacts with the SecYEG preprotein conducting channel. Has a central role in coupling the hydrolysis of ATP to the transfer of proteins into and across the cell membrane, serving as an ATP-driven molecular motor driving the stepwise translocation of polypeptide chains across the membrane. In Listeria monocytogenes serotype 4b (strain F2365), this protein is Protein translocase subunit SecA 2.